A 330-amino-acid polypeptide reads, in one-letter code: Ketol-acid reductoisomerase (NADP(+)) (330 aa).

The KARI N-terminal Rossmann domain maps to 1–181; it reads MKVYYEQDAT…GGARSGVIET (181 aa). NADP(+)-binding positions include 24 to 27, Arg47, and 82 to 85; these read YGSQ and DQVQ. His107 is an active-site residue. Position 133 (Gly133) interacts with NADP(+). The region spanning 182-327 is the KARI C-terminal knotted domain; the sequence is TFKEETETDL…GKLRGMMPWL (146 aa). Residues Asp190, Glu194, Glu226, and Glu230 each coordinate Mg(2+). Ser251 is a binding site for substrate.

The protein belongs to the ketol-acid reductoisomerase family. It depends on Mg(2+) as a cofactor.

The enzyme catalyses (2R)-2,3-dihydroxy-3-methylbutanoate + NADP(+) = (2S)-2-acetolactate + NADPH + H(+). The catalysed reaction is (2R,3R)-2,3-dihydroxy-3-methylpentanoate + NADP(+) = (S)-2-ethyl-2-hydroxy-3-oxobutanoate + NADPH + H(+). It functions in the pathway amino-acid biosynthesis; L-isoleucine biosynthesis; L-isoleucine from 2-oxobutanoate: step 2/4. It participates in amino-acid biosynthesis; L-valine biosynthesis; L-valine from pyruvate: step 2/4. Involved in the biosynthesis of branched-chain amino acids (BCAA). Catalyzes an alkyl-migration followed by a ketol-acid reduction of (S)-2-acetolactate (S2AL) to yield (R)-2,3-dihydroxy-isovalerate. In the isomerase reaction, S2AL is rearranged via a Mg-dependent methyl migration to produce 3-hydroxy-3-methyl-2-ketobutyrate (HMKB). In the reductase reaction, this 2-ketoacid undergoes a metal-dependent reduction by NADPH to yield (R)-2,3-dihydroxy-isovalerate. This Nitratidesulfovibrio vulgaris (strain DSM 19637 / Miyazaki F) (Desulfovibrio vulgaris) protein is Ketol-acid reductoisomerase (NADP(+)).